We begin with the raw amino-acid sequence, 115 residues long: UPF0738 protein SSP1780 (115 aa).

The protein belongs to the UPF0738 family.

This chain is UPF0738 protein SSP1780, found in Staphylococcus saprophyticus subsp. saprophyticus (strain ATCC 15305 / DSM 20229 / NCIMB 8711 / NCTC 7292 / S-41).